The following is a 5251-amino-acid chain: Dynein heavy chain-like protein 2 (5251 aa).

Kelch repeat units lie at residues 37-87 (GLFL…CYHN), 95-143 (YVII…LQNG), 266-317 (SLIL…IHGN), 318-367 (NLFI…LVES), and 372-421 (IIFI…QNNE). Residues 140–188 (LQNGINGTNEKGYISQTDDENCSDNKYGENQDYGSNDSDSKDGEDIDKD) are disordered. The tract at residues 686-732 (NNIEQRNNNNDNNDNNNNDNNNNNNNDNNNNNNNNNNNNNNNNDNLN) is disordered. Positions 692 to 730 (NNNNDNNDNNNNDNNNNNNNDNNNNNNNNNNNNNNNNDN) are enriched in low complexity. Coiled-coil stretches lie at residues 1155 to 1225 (DNII…KKIK) and 1544 to 1610 (KLNN…KLIS). Residues 1554-1598 (EKNKNANENSNEIETNKYNKKEELTNNRDGDGDDDDNIKNDKDEK) are disordered. Residues 1567 to 1583 (ETNKYNKKEELTNNRDG) show a composition bias toward basic and acidic residues. The Kelch 6 repeat unit spans residues 1639–1685 (HIKYTLKYYITNLFRLKDLFNNEKEKWIDENYLAQVFILCNTIFFVN). The segment at 1802-1825 (HQEGKQEYNNKNNDNDNNNNNNNN) is disordered. The segment covering 1810-1825 (NNKNNDNDNNNNNNNN) has biased composition (low complexity). 1895-1902 (GPAGTGKT) serves as a coordination point for ATP. Positions 2136-2188 (NDINENKKEKDNIEELKSDNVKEEKKTKKKHLEDNNNNKKKELFNLNNIEKEL) form a coiled coil. Positions 2152-2171 (KSDNVKEEKKTKKKHLEDNN) are disordered. 2224–2231 (GEAGCGKT) lines the ATP pocket. Residues 2447–2494 (VIWCFGGFLGEKDNVNYKKSFDKYWKNTFKSIKVNRKISVFDFYVENN) form a Kelch 7 repeat. ATP is bound by residues 2546–2553 (GKTGVGKT) and 2890–2897 (GIGGCGKT). 2 stretches are compositionally biased toward low complexity: residues 3138-3154 (DNNNNNNNNRDNIDGNN) and 3652-3671 (DQNFINNNNNNNSSNNNSTN). Disordered stretches follow at residues 3138–3163 (DNNNNNNNNRDNIDGNNFFKNREGND), 3652–3686 (DQNFINNNNNNNSSNNNSTNFGYNEDPQKKDNHNN), 4042–4250 (EDND…EENV), 4280–4299 (NGKIDKDKEDDLEEEEDFEN), 4773–4824 (MDFH…ENEE), and 4910–4948 (KIIKKEKPGDNKDNKYTHDQKKETIHKEEDDEDEKHSGS). Positions 4059-4086 (KMEDEEKMEEEKVDEEKMEEEKVDEEKM) are enriched in acidic residues. Residues 4087–4247 (EDEKVEEKME…EKGEEQKAEE (161 aa)) show a composition bias toward basic and acidic residues. Composition is skewed to acidic residues over residues 4289–4299 (DDLEEEEDFEN) and 4807–4823 (DDDDESNNSNDNEEENE). Basic and acidic residues predominate over residues 4912–4937 (IKKEKPGDNKDNKYTHDQKKETIHKE).

The protein belongs to the dynein heavy chain family. In terms of assembly, consists of at least two heavy chains and a number of intermediate and light chains.

It localises to the cytoplasm. Its subcellular location is the cytoskeleton. In terms of biological role, acts as a motor for the intracellular retrograde motility of vesicles and organelles along microtubules. Dynein has ATPase activity; the force-producing power stroke is thought to occur on release of ADP. This Plasmodium falciparum (isolate 3D7) protein is Dynein heavy chain-like protein 2.